The primary structure comprises 82 residues: MYYLVPKTTYGNLQCSSLAMTFHERGESGDVLSCACRLYLYIMPLFFNTFLRQKYFQLCSNTPYRNNGEARYFCHLFRCSII.

This is an uncharacterized protein from Saccharomyces cerevisiae (strain ATCC 204508 / S288c) (Baker's yeast).